The sequence spans 395 residues: MAKKRVVVLYGGRADEHSISCISTAGVLGAMDTERFEPIPVGITKDGKWIINGEDPRGWNLDGGELPTVKITPESRPVMLDPSRGQDGFFIGEPSHINSADSGFGTSFVSMSDPEMHHVLTSLGHVDAVLPVLHGPYGEDGTVQGLLEMMGVPYVGCGVFASAACMDKHYTKVVLDAAGIPTAPGVTVDARNFTAADVLAEIEDAGLTYPLFVKPSRAGSSFGVTKVEKADDRETQQDRLAAAIATAGEHDWKVLVEQGIDGREIECAVLCPKAGDEPEASWPGEIVLDHQNDDQFYDFDSKYMDASASHVEVPANLPVSVLEDVRDVARRAFKAVDGVGLSRVDTFVTPDGTVMVNEINTMPGFTPISMYPKAWDATGVSYTELITRLIEGVLR.

Residues 172 to 391 form the ATP-grasp domain; the sequence is KVVLDAAGIP…YTELITRLIE (220 aa). 204-266 serves as a coordination point for ATP; that stretch reads DAGLTYPLFV…EQGIDGREIE (63 aa). Mg(2+) is bound by residues Asp-345, Glu-358, and Asn-360.

This sequence belongs to the D-alanine--D-alanine ligase family. The cofactor is Mg(2+). Requires Mn(2+) as cofactor.

It localises to the cytoplasm. It carries out the reaction 2 D-alanine + ATP = D-alanyl-D-alanine + ADP + phosphate + H(+). Its pathway is cell wall biogenesis; peptidoglycan biosynthesis. Functionally, cell wall formation. In Bifidobacterium longum (strain DJO10A), this protein is D-alanine--D-alanine ligase.